Here is an 89-residue protein sequence, read N- to C-terminus: Small ribosomal subunit protein uS15 (89 aa).

This sequence belongs to the universal ribosomal protein uS15 family. As to quaternary structure, part of the 30S ribosomal subunit. Forms a bridge to the 50S subunit in the 70S ribosome, contacting the 23S rRNA.

Its function is as follows. One of the primary rRNA binding proteins, it binds directly to 16S rRNA where it helps nucleate assembly of the platform of the 30S subunit by binding and bridging several RNA helices of the 16S rRNA. In terms of biological role, forms an intersubunit bridge (bridge B4) with the 23S rRNA of the 50S subunit in the ribosome. The chain is Small ribosomal subunit protein uS15 from Brucella abortus (strain S19).